We begin with the raw amino-acid sequence, 111 residues long: MATSGFKHLVVVKFKEDTKVDEILKGLENLVSQIDTVKSFEWGEDKESHDMLRQGFTHAFSMTFENKDGYVAFTSHPLHVEFSAAFTAVIDKIVLLDFPVAAVKSSVVATP.

Positions 6-98 constitute a Stress-response A/B barrel domain; that stretch reads FKHLVVVKFK…VIDKIVLLDF (93 aa). Residues V31, I34, D35, and V37 each coordinate Mg(2+).

In terms of assembly, homodimer. The cofactor is Mg(2+).

In terms of biological role, involved in stress response. In Arabidopsis thaliana (Mouse-ear cress), this protein is Stress-response A/B barrel domain-containing protein At5g22580.